The chain runs to 73 residues: Large ribosomal subunit protein bL31 (73 aa).

The protein belongs to the bacterial ribosomal protein bL31 family. Type A subfamily. In terms of assembly, part of the 50S ribosomal subunit.

Binds the 23S rRNA. The protein is Large ribosomal subunit protein bL31 (rpmE) of Ruegeria pomeroyi (strain ATCC 700808 / DSM 15171 / DSS-3) (Silicibacter pomeroyi).